Consider the following 363-residue polypeptide: MSAIYNFCAGPAMLPAAVMKKAQQELLDWNGQGVSVMEISHRSKEFIALTEQAESDLRELMQIPANYHVLFMHGGGRGQFSAVVNNFLGEQGKALYLVSGQWSSAALAEAQKLAGEAQIDSLNIVEKHNGLNAVVLPDLHKIDADYRYVHYCPNETVDGIEIFDELDSPWPIVADLSSTIMSREIDVSRYGLIYAGAQKNIGPSGLSIVIVRDDMLKLPSLPQSSIMDYRLAVEHDSMFNTPPTFAWYLAAEVFAWLKSTGGISSIAKINQQKAQMLYQCIDGNAFYRNGVVAANRSQMNVTFQLVNEALDGEFLKQAQIAGLVALKGHRIVGGMRASLYNAMPLDGIVALVKFMNEFAAKHS.

R42 contributes to the L-glutamate binding site. Residues 76-77 (GR), W102, T156, D175, and Q198 each bind pyridoxal 5'-phosphate. Position 199 is an N6-(pyridoxal phosphate)lysine (K199). A pyridoxal 5'-phosphate-binding site is contributed by 240–241 (NT).

Belongs to the class-V pyridoxal-phosphate-dependent aminotransferase family. SerC subfamily. As to quaternary structure, homodimer. Requires pyridoxal 5'-phosphate as cofactor.

The protein resides in the cytoplasm. The catalysed reaction is O-phospho-L-serine + 2-oxoglutarate = 3-phosphooxypyruvate + L-glutamate. It catalyses the reaction 4-(phosphooxy)-L-threonine + 2-oxoglutarate = (R)-3-hydroxy-2-oxo-4-phosphooxybutanoate + L-glutamate. Its pathway is amino-acid biosynthesis; L-serine biosynthesis; L-serine from 3-phospho-D-glycerate: step 2/3. The protein operates within cofactor biosynthesis; pyridoxine 5'-phosphate biosynthesis; pyridoxine 5'-phosphate from D-erythrose 4-phosphate: step 3/5. Its function is as follows. Catalyzes the reversible conversion of 3-phosphohydroxypyruvate to phosphoserine and of 3-hydroxy-2-oxo-4-phosphonooxybutanoate to phosphohydroxythreonine. In Shewanella baltica (strain OS195), this protein is Phosphoserine aminotransferase.